The following is a 22-amino-acid chain: Defensin D1 (22 aa).

Belongs to the DEFL family. Group II subfamily.

Its function is as follows. Antimicrobial peptide. Active against Gram-positive and Gram-negative bacterial pathogens. The sequence is that of Defensin D1 from Spinacia oleracea (Spinach).